The chain runs to 434 residues: 3-isopropylmalate dehydratase large subunit 1 (434 aa).

The [4Fe-4S] cluster site is built by cysteine 308, cysteine 368, and cysteine 371.

Belongs to the aconitase/IPM isomerase family. LeuC type 2 subfamily. In terms of assembly, heterodimer of LeuC and LeuD. [4Fe-4S] cluster is required as a cofactor.

It catalyses the reaction (2R,3S)-3-isopropylmalate = (2S)-2-isopropylmalate. Its pathway is amino-acid biosynthesis; L-leucine biosynthesis; L-leucine from 3-methyl-2-oxobutanoate: step 2/4. In terms of biological role, catalyzes the isomerization between 2-isopropylmalate and 3-isopropylmalate, via the formation of 2-isopropylmaleate. This is 3-isopropylmalate dehydratase large subunit 1 from Deinococcus radiodurans (strain ATCC 13939 / DSM 20539 / JCM 16871 / CCUG 27074 / LMG 4051 / NBRC 15346 / NCIMB 9279 / VKM B-1422 / R1).